Consider the following 398-residue polypeptide: Metal tolerance protein 1 (398 aa).

The Cytoplasmic segment spans residues 1–56; the sequence is MESSSPHHSHIVEVNVGKSDEERIIVASKVCGEAPCGFSDSKNASGDAHERSASMR. Residues 57 to 77 traverse the membrane as a helical segment; the sequence is KLCIAVVLCLVFMSVEVVGGI. The Vacuolar segment spans residues 78 to 89; the sequence is KANSLAILTDAA. A helical transmembrane segment spans residues 90-110; it reads HLLSDVAAFAISLFSLWAAGW. Residues 111–122 are Cytoplasmic-facing; that stretch reads EATPRQTYGFFR. The chain crosses the membrane as a helical span at residues 123–143; that stretch reads IEILGALVSIQLIWLLTGILV. The Vacuolar segment spans residues 144 to 159; the sequence is YEAIIRIVTETSEVNG. A helical membrane pass occupies residues 160–180; that stretch reads FLMFLVAAFGLVVNIIMAVLL. Residues 181–263 lie on the Cytoplasmic side of the membrane; the sequence is GHDHGHSHGH…KRNINLQGAY (83 aa). The interval 182-232 is required for zinc-binding; sequence HDHGHSHGHGHGHGHDHHNHSHGVTVTTHHHHHDHEHGHSHGHGEDKHHAH. The disordered stretch occupies residues 186–232; sequence HSHGHGHGHGHDHHNHSHGVTVTTHHHHHDHEHGHSHGHGEDKHHAH. The segment covering 187–202 has biased composition (basic residues); that stretch reads SHGHGHGHGHDHHNHS. Residues 216–232 are compositionally biased toward basic and acidic residues; that stretch reads HEHGHSHGHGEDKHHAH. Residues 264–284 form a helical membrane-spanning segment; sequence LHVLGDSIQSVGVMIGGAIIW. The Vacuolar portion of the chain corresponds to 285 to 290; it reads YNPEWK. The helical transmembrane segment at 291–311 threads the bilayer; the sequence is IVDLICTLAFSVIVLGTTINM. The Cytoplasmic portion of the chain corresponds to 312 to 398; that stretch reads IRNILEVLME…ISHVTIQIER (87 aa).

Belongs to the cation diffusion facilitator (CDF) transporter (TC 2.A.4) family. SLC30A subfamily. In terms of tissue distribution, ubiquitously expressed at low levels.

The protein resides in the vacuole membrane. Mediates zinc accumulation in roots and confers resistance to zinc. Involved in sequestration of excess zinc in the cytoplasm into vacuoles to maintain zinc homeostasis. Can also transport cadmium with a low efficiency. This Arabidopsis thaliana (Mouse-ear cress) protein is Metal tolerance protein 1.